The following is a 1389-amino-acid chain: Superkiller protein 3 (1389 aa).

TPR repeat units follow at residues 2-35 (AKPA…DANN), 36-69 (YNAN…DEKA), and 90-123 (HKIT…VKKY). The interval 326–355 (SNNSAELAKETKEEDDSENSVDKKENEEDI) is disordered. TPR repeat units follow at residues 381–414 (TIIS…LKRL), 429–463 (FQLC…DPRN), 465–497 (HALL…HEND), 498–530 (PSLS…LLSM), 538–574 (AEAY…DPNY), 575–608 (APAY…DASQ), 650–683 (NWHH…SPKD), 684–717 (TNAW…DPDD), 719–751 (YVKY…RSKE), 759–792 (AETY…CCNV), 931–963 (VFWN…NERS), 964–997 (SGVW…DPDN), 999–1031 (QAWL…SSGK), 1124–1157 (IDAK…LEGE), and 1167–1200 (LGLN…SDSN).

In terms of assembly, component of the SKI complex composed of at least ski2, ski3 and ski8. The SKI complex interacts with ski7, which makes the link between the SKI complex and the exosome in order to perform mRNA degradation.

Its subcellular location is the cytoplasm. Component of the SKI complex involved in 3'-mRNA degradation pathway. The polypeptide is Superkiller protein 3 (ski3) (Schizosaccharomyces pombe (strain 972 / ATCC 24843) (Fission yeast)).